The following is a 633-amino-acid chain: Threonine--tRNA ligase (633 aa).

The 61-residue stretch at 1-61 (MINVYFSDNS…TEDCKFEVIT (61 aa)) folds into the TGS domain. Residues 242 to 533 (DHRKIGKELE…LIEHHSGKLP (292 aa)) form a catalytic region. Zn(2+)-binding residues include C333, H384, and H510.

This sequence belongs to the class-II aminoacyl-tRNA synthetase family. As to quaternary structure, homodimer. The cofactor is Zn(2+).

Its subcellular location is the cytoplasm. The catalysed reaction is tRNA(Thr) + L-threonine + ATP = L-threonyl-tRNA(Thr) + AMP + diphosphate + H(+). Functionally, catalyzes the attachment of threonine to tRNA(Thr) in a two-step reaction: L-threonine is first activated by ATP to form Thr-AMP and then transferred to the acceptor end of tRNA(Thr). Also edits incorrectly charged L-seryl-tRNA(Thr). The polypeptide is Threonine--tRNA ligase (Ehrlichia ruminantium (strain Gardel)).